Reading from the N-terminus, the 1122-residue chain is Protein CAF130 (1122 aa).

The tract at residues methionine 1–aspartate 24 is disordered. Residues alanine 11–aspartate 24 are compositionally biased toward polar residues. At serine 1042 the chain carries Phosphoserine.

As to quaternary structure, subunit of the 1.0 MDa CCR4-NOT core complex that contains CCR4, CAF1, NOT1, NOT2, NOT3, NOT4, NOT5, CAF40 and CAF130. In the complex interacts with NOT1. The core complex probably is part of a less characterized 1.9 MDa CCR4-NOT complex.

Its subcellular location is the cytoplasm. The protein localises to the nucleus. Its function is as follows. Acts as a component of the CCR4-NOT core complex, which in the nucleus seems to be a general transcription factor, and in the cytoplasm the major mRNA deadenylase involved in mRNA turnover. The protein is Protein CAF130 (CAF130) of Saccharomyces cerevisiae (strain ATCC 204508 / S288c) (Baker's yeast).